The chain runs to 453 residues: UDP-glucosyltransferase avaP (453 aa).

The protein belongs to the UDP-glycosyltransferase family.

Its pathway is secondary metabolite biosynthesis. Functionally, UDP-glucosyltransferase; part of the cluster that mediates the biosynthesis of a highly modified cyclo-arginine-tryptophan dipeptide (cRW). The first step of the pathway is perfornmed by the arginine-containing cyclodipeptide synthase (RCPDS) avaA that acts as the scaffold-generating enzyme and is responsible for formation of the cyclo-Arg-Trp (cRW) diketopiperazine. AvaB then acts as a multifunctional flavoenzyme that is responsible for generating the cyclo-Arg-formylkynurenine DKP, which can be deformylated by avaC. AvaB then further catalyzes an additional N-oxidation followed by cyclization and dehydration. The next step is an N-acetylation of the guanidine group catalyzed by the arginine N-acetyltransferase avaD. The roles of the additional enzymes identified within the ava cluster still have to be determined. This is UDP-glucosyltransferase avaP from Aspergillus versicolor.